A 404-amino-acid polypeptide reads, in one-letter code: Zinc finger CCCH domain-containing protein 15 homolog (404 aa).

A compositionally biased stretch (pro residues) spans 1–10 (MPPKKAPPGP). Positions 1–71 (MPPKKAPPGP…KRKEEKEKKL (71 aa)) are disordered. Residues 12–28 (KKTEQKKKEKVIEDKTF) show a composition bias toward basic and acidic residues. Residues 38–50 (QQKFIQQVQKQVQ) are compositionally biased toward low complexity. Positions 56 to 71 (PRQDGDKRKEEKEKKL) are enriched in basic and acidic residues. C3H1-type zinc fingers lie at residues 94 to 121 (DPKS…HDLS) and 165 to 202 (PTTD…HALP). A Phosphothreonine modification is found at threonine 218. Serine 221 carries the phosphoserine modification. Residues 246 to 270 (LAWKKRKIAEKKAKLAAEEERKKSD) adopt a coiled-coil conformation. 2 stretches are compositionally biased toward low complexity: residues 352–361 (EAAKTAAAED) and 369–380 (PSSSAPANDAAP). The segment at 352 to 380 (EAAKTAAAEDAAADEDGPSSSAPANDAAP) is disordered.

This sequence belongs to the ZC3H15/TMA46 family.

The polypeptide is Zinc finger CCCH domain-containing protein 15 homolog (Drosophila melanogaster (Fruit fly)).